The sequence spans 885 residues: Protein arg11, mitochondrial (885 aa).

Residues 1 to 59 (MLIELQQIVKSGLVRNGAKHCTKRSLLCSNASVIASKRFQGSFAPGQQQPLNPLAKPIE) constitute a mitochondrion transit peptide. The 154-residue stretch at 346-499 (FVINKHDSLD…SDKPFADAII (154 aa)) folds into the N-acetyltransferase domain. Positions 503 to 523 (STKPPTASSTTNNPSSSQINQ) are enriched in low complexity. Residues 503–532 (STKPPTASSTTNNPSSSQINQKRSYSTSSL) form a disordered region. The active site involves Cys703.

The protein in the N-terminal section; belongs to the acetylglutamate kinase family. This sequence in the C-terminal section; belongs to the NAGSA dehydrogenase family. The protein precursor is probably cleaved into the two biologically active enzymes, the kinase and the reductase.

Its subcellular location is the mitochondrion. It carries out the reaction N-acetyl-L-glutamate 5-semialdehyde + phosphate + NADP(+) = N-acetyl-L-glutamyl 5-phosphate + NADPH + H(+). The enzyme catalyses N-acetyl-L-glutamate + ATP = N-acetyl-L-glutamyl 5-phosphate + ADP. It participates in amino-acid biosynthesis; L-arginine biosynthesis; N(2)-acetyl-L-ornithine from L-glutamate: step 2/4. Its pathway is amino-acid biosynthesis; L-arginine biosynthesis; N(2)-acetyl-L-ornithine from L-glutamate: step 3/4. With respect to regulation, the kinase activity is inhibited by arginine. The protein is Protein arg11, mitochondrial (arg11) of Schizosaccharomyces pombe (strain 972 / ATCC 24843) (Fission yeast).